The following is a 1521-amino-acid chain: Lysophospholipase NTE1 (1521 aa).

Over 1-50 (MDVVNSTARAAVTSATAVTAVTGTGDRHPNPLSSAVAAASDVANAHGSSS) the chain is Cytoplasmic. A helical transmembrane segment spans residues 51–71 (WLGLFARVVLWLLQFVSMVLY). Over 72–96 (YAIKLATISVPTLLYTLFSTSLTVT) the chain is Lumenal. The chain crosses the membrane as a helical span at residues 97 to 117 (MNATTLMLIVAAMIGAISWVV). Topologically, residues 118–1521 (RYRYLNMYSR…RTMAPRRASI (1404 aa)) are cytoplasmic. Disordered stretches follow at residues 280 to 301 (HADE…PNYP), 315 to 372 (SVPN…SAHP), and 738 to 768 (HAMD…KVDD). Composition is skewed to polar residues over residues 316–334 (VPNT…NNLP) and 738–753 (HAMD…QRSP). A nucleoside 3',5'-cyclic phosphate contacts are provided by residues 670–789 (PASP…GGLA) and 837–957 (RLTN…IASR). Residues 1217-1381 (LVLGGGGARG…VDNLTVSHMK (165 aa)) form the PNPLA domain. A GXGXXG motif is present at residues 1221 to 1226 (GGGARG). The short motif at 1248 to 1252 (GTSIG) is the GXSXG element. S1250 acts as the Nucleophile in catalysis. D1368 acts as the Proton acceptor in catalysis. A DGA/G motif is present at residues 1368–1370 (DGG).

This sequence belongs to the NTE family.

The protein resides in the endoplasmic reticulum membrane. The catalysed reaction is a 1-acyl-sn-glycero-3-phosphocholine + H2O = sn-glycerol 3-phosphocholine + a fatty acid + H(+). With respect to regulation, inhibited by organophosphorus esters. In terms of biological role, intracellular phospholipase B that catalyzes the double deacylation of phosphatidylcholine (PC) to glycerophosphocholine (GroPCho). Plays an important role in membrane lipid homeostasis. Responsible for the rapid PC turnover in response to inositol, elevated temperatures, or when choline is present in the growth medium. The sequence is that of Lysophospholipase NTE1 (NTE1) from Chaetomium globosum (strain ATCC 6205 / CBS 148.51 / DSM 1962 / NBRC 6347 / NRRL 1970) (Soil fungus).